Here is a 95-residue protein sequence, read N- to C-terminus: Small ribosomal subunit protein bS21 (95 aa).

Residues 56 to 95 (KLARKKMQREGLLPMKPKPVFGAGPGAGRGGPAAGPRGPR) form a disordered region. Residues 78–88 (AGPGAGRGGPA) are compositionally biased toward gly residues.

This sequence belongs to the bacterial ribosomal protein bS21 family.

This is Small ribosomal subunit protein bS21 from Nitrobacter winogradskyi (strain ATCC 25391 / DSM 10237 / CIP 104748 / NCIMB 11846 / Nb-255).